A 532-amino-acid chain; its full sequence is Zinc metalloproteinase nas-29 (532 aa).

A signal peptide spans 1-22; it reads MISKNTSFCGFLILVLATCMSA. N5, N27, N70, and N106 each carry an N-linked (GlcNAc...) asparagine glycan. The propeptide occupies 23–134; it reads QFVSNESIKL…NGESTDRTKR (112 aa). Positions 135-335 constitute a Peptidase M12A domain; that stretch reads QAYLDNNYPA…HIMNQHYQCQ (201 aa). 6 disulfides stabilise this stretch: C179-C334, C201-C222, C338-C358, C360-C369, C380-C408, and C435-C456. H230 is a binding site for Zn(2+). E231 is an active-site residue. Zn(2+) contacts are provided by H234 and H240. The EGF-like domain maps to 330–370; it reads QHYQCQEKCPTQAPCQNGGFTNSRNCKVCKCPTGFGGAYCQ. Positions 380–494 constitute a CUB domain; sequence CGGYLNAEET…VSFEYSFVST (115 aa). N503 is a glycosylation site (N-linked (GlcNAc...) asparagine).

The cofactor is Zn(2+).

It localises to the secreted. In terms of biological role, metalloprotease. This chain is Zinc metalloproteinase nas-29 (nas-29), found in Caenorhabditis elegans.